The primary structure comprises 376 residues: 28S rRNA (uridine-N(3))-methyltransferase (376 aa).

2 disordered regions span residues 1–33 (MAER…EEKK) and 49–71 (AQEE…DRGR). A compositionally biased stretch (basic and acidic residues) spans 15–33 (HGQRIEWRKWKQQKKEEKK). Residues T289, R292, G312, N341, and T342 each contribute to the S-adenosyl-L-homocysteine site. R292, G312, N341, and T342 together coordinate S-adenosyl-L-methionine.

This sequence belongs to the class IV-like SAM-binding methyltransferase superfamily. As to quaternary structure, interacts with INCA1.

The protein localises to the cytoplasm. It localises to the cytoskeleton. The protein resides in the spindle. It is found in the chromosome. Its subcellular location is the centromere. The protein localises to the kinetochore. It localises to the microtubule organizing center. The protein resides in the centrosome. The enzyme catalyses uridine in 28S rRNA + S-adenosyl-L-methionine = N(3)-methyluridine in 28S rRNA + S-adenosyl-L-homocysteine + H(+). In terms of biological role, S-adenosyl-L-methionine-dependent methyltransferase that specifically methylates the N3 position of a uridine in 28S rRNA. Required for association of the centrosomes with the poles of the bipolar mitotic spindle during metaphase. Also involved in chromosome alignment. May promote centrosome maturation probably by recruiting A-kinase anchor protein AKAP9 to centrosomes in early mitosis. Binds specifically to miRNA MIR145 hairpin, regulates MIR145 expression at a postranscriptional level. The polypeptide is 28S rRNA (uridine-N(3))-methyltransferase (Homo sapiens (Human)).